Reading from the N-terminus, the 285-residue chain is RNA 5'-monophosphate methyltransferase (285 aa).

Residues Arg46, Asn77, Asp111, 136–137 (DI), and Met165 contribute to the S-adenosyl-L-methionine site. The 223-residue stretch at 53–275 (ELLRQLFPPE…KHTHETQAIP (223 aa)) folds into the Bin3-type SAM domain.

The protein belongs to the methyltransferase superfamily. As to quaternary structure, interacts with DICER1; the interaction may be mediated by RNA.

It is found in the cytoplasm. It carries out the reaction a 5'-end 5'-phospho-ribonucleoside-RNA + S-adenosyl-L-methionine = a 5'-end (5'-methylphospho)-ribonucleoside-RNA + S-adenosyl-L-homocysteine. It catalyses the reaction a 5'-end 5'-phospho-ribonucleoside-RNA + 2 S-adenosyl-L-methionine = a 5'-end (5'-bismethylphospho)-ribonucleoside-RNA + 2 S-adenosyl-L-homocysteine. Functionally, O-methyltransferase that specifically monomethylates 5'-monophosphate of cytoplasmic histidyl tRNA (tRNA(His)), acting as a capping enzyme by protecting tRNA(His) from cleavage by DICER1. Also able, with less efficiently, to methylate the 5' monophosphate of a subset of pre-miRNAs, acting as a negative regulator of miRNA processing. The 5' monophosphate of pre-miRNAs is recognized by DICER1 and is required for pre-miRNAs processing: methylation at this position reduces the processing of pre-miRNAs by DICER1. Was also reported to mediate dimethylation of pre-miR-145; however dimethylation cannot be reproduced by another group which observes a monomethylation of pre-miR-145. The polypeptide is RNA 5'-monophosphate methyltransferase (Mus musculus (Mouse)).